Here is a 392-residue protein sequence, read N- to C-terminus: GTPase Obg (392 aa).

The region spanning 1-159 (MKFVDEATIL…RDLQLELMLL (159 aa)) is the Obg domain. Positions 127–146 (NTRFKSSVNRTPRQKTMGTP) are disordered. The segment covering 129 to 143 (RFKSSVNRTPRQKTM) has biased composition (polar residues). The region spanning 160–333 (ADVGMLGLPN…LCWDVMAFIK (174 aa)) is the OBG-type G domain. Residues 166–173 (GLPNAGKS), 191–195 (FTTLV), 213–216 (DIPG), 283–286 (NKVD), and 314–316 (SAA) each bind GTP. Mg(2+) is bound by residues Ser-173 and Thr-193. The segment at 360 to 392 (QLEEAQPEVEEDDDWDDDWDEDDEEGVETIYQR) is disordered. Residues 364–386 (AQPEVEEDDDWDDDWDEDDEEGV) show a composition bias toward acidic residues.

It belongs to the TRAFAC class OBG-HflX-like GTPase superfamily. OBG GTPase family. In terms of assembly, monomer. Mg(2+) serves as cofactor.

The protein localises to the cytoplasm. In terms of biological role, an essential GTPase which binds GTP, GDP and possibly (p)ppGpp with moderate affinity, with high nucleotide exchange rates and a fairly low GTP hydrolysis rate. Plays a role in control of the cell cycle, stress response, ribosome biogenesis and in those bacteria that undergo differentiation, in morphogenesis control. The protein is GTPase Obg of Erwinia tasmaniensis (strain DSM 17950 / CFBP 7177 / CIP 109463 / NCPPB 4357 / Et1/99).